A 742-amino-acid polypeptide reads, in one-letter code: uncharacterized protein (742 aa).

The disordered stretch occupies residues M1–D102. The span at N18–N28 shows a compositional bias: low complexity. A compositionally biased stretch (basic and acidic residues) spans R48–D57. Polar residues-rich tracts occupy residues T60–P69 and H77–N99.

This is an uncharacterized protein from Acanthamoeba polyphaga mimivirus (APMV).